A 67-amino-acid polypeptide reads, in one-letter code: Conotoxin AbVIO (67 aa).

The first 17 residues, 1 to 17 (VIIIAVLFLTACQLIAT), serve as a signal peptide directing secretion. Positions 18-40 (ASYARSERKHPDLRLSSRNSKLS) are excised as a propeptide. Cystine bridges form between cysteine 43-cysteine 57, cysteine 50-cysteine 61, and cysteine 56-cysteine 66.

Belongs to the conotoxin O1 superfamily. Expressed by the venom duct.

The protein localises to the secreted. In Conus abbreviatus (Abbreviated cone), this protein is Conotoxin AbVIO.